The chain runs to 95 residues: Large ribosomal subunit protein bL25 (95 aa).

This sequence belongs to the bacterial ribosomal protein bL25 family. Part of the 50S ribosomal subunit; part of the 5S rRNA/L5/L18/L25 subcomplex. Contacts the 5S rRNA. Binds to the 5S rRNA independently of L5 and L18.

In terms of biological role, this is one of the proteins that binds to the 5S RNA in the ribosome where it forms part of the central protuberance. This is Large ribosomal subunit protein bL25 from Haemophilus influenzae (strain ATCC 51907 / DSM 11121 / KW20 / Rd).